A 333-amino-acid chain; its full sequence is Meiotic recombination protein rec24 (333 aa).

The protein belongs to the MEI4L family. In terms of assembly, interacts with Rec7, as part of the meiotic recombination initiation complex.

It is found in the cytoplasm. Its subcellular location is the nucleus. Functionally, required for correct meiotic chromosome segregation and recombination. Accessory protein required for Rec12 activity, which is involved in formation of the double-strand breaks (DSBs) that initiate meiotic recombination. This Schizosaccharomyces pombe (strain 972 / ATCC 24843) (Fission yeast) protein is Meiotic recombination protein rec24 (rec24).